The primary structure comprises 335 residues: Phenylalanine--tRNA ligase alpha subunit (335 aa).

Position 262 (Glu-262) interacts with Mg(2+).

The protein belongs to the class-II aminoacyl-tRNA synthetase family. Phe-tRNA synthetase alpha subunit type 1 subfamily. As to quaternary structure, tetramer of two alpha and two beta subunits. The cofactor is Mg(2+).

It localises to the cytoplasm. The enzyme catalyses tRNA(Phe) + L-phenylalanine + ATP = L-phenylalanyl-tRNA(Phe) + AMP + diphosphate + H(+). The polypeptide is Phenylalanine--tRNA ligase alpha subunit (Prochlorococcus marinus (strain MIT 9313)).